The primary structure comprises 313 residues: Ribosomal protein L11 methyltransferase (313 aa).

4 residues coordinate S-adenosyl-L-methionine: Thr161, Gly182, Asp204, and Asn247.

It belongs to the methyltransferase superfamily. PrmA family.

It is found in the cytoplasm. The catalysed reaction is L-lysyl-[protein] + 3 S-adenosyl-L-methionine = N(6),N(6),N(6)-trimethyl-L-lysyl-[protein] + 3 S-adenosyl-L-homocysteine + 3 H(+). Its function is as follows. Methylates ribosomal protein L11. This Alkaliphilus oremlandii (strain OhILAs) (Clostridium oremlandii (strain OhILAs)) protein is Ribosomal protein L11 methyltransferase.